The primary structure comprises 287 residues: Bifunctional protein FolD (287 aa).

NADP(+) contacts are provided by residues 166–168 (GAS) and isoleucine 232.

This sequence belongs to the tetrahydrofolate dehydrogenase/cyclohydrolase family. As to quaternary structure, homodimer.

It catalyses the reaction (6R)-5,10-methylene-5,6,7,8-tetrahydrofolate + NADP(+) = (6R)-5,10-methenyltetrahydrofolate + NADPH. It carries out the reaction (6R)-5,10-methenyltetrahydrofolate + H2O = (6R)-10-formyltetrahydrofolate + H(+). It functions in the pathway one-carbon metabolism; tetrahydrofolate interconversion. Its function is as follows. Catalyzes the oxidation of 5,10-methylenetetrahydrofolate to 5,10-methenyltetrahydrofolate and then the hydrolysis of 5,10-methenyltetrahydrofolate to 10-formyltetrahydrofolate. The polypeptide is Bifunctional protein FolD (Pectobacterium atrosepticum (strain SCRI 1043 / ATCC BAA-672) (Erwinia carotovora subsp. atroseptica)).